The following is a 279-amino-acid chain: Tryptophan 2,3-dioxygenase (279 aa).

Residues 48-52 (FIIQH), Tyr110, and Arg114 contribute to the substrate site. His237 contacts heme. Thr251 serves as a coordination point for substrate.

Belongs to the tryptophan 2,3-dioxygenase family. Homotetramer. Requires heme as cofactor.

The enzyme catalyses L-tryptophan + O2 = N-formyl-L-kynurenine. It functions in the pathway amino-acid degradation; L-tryptophan degradation via kynurenine pathway; L-kynurenine from L-tryptophan: step 1/2. Its function is as follows. Heme-dependent dioxygenase that catalyzes the oxidative cleavage of the L-tryptophan (L-Trp) pyrrole ring and converts L-tryptophan to N-formyl-L-kynurenine. Catalyzes the oxidative cleavage of the indole moiety. This Ruegeria sp. (strain TM1040) (Silicibacter sp.) protein is Tryptophan 2,3-dioxygenase.